The sequence spans 1298 residues: MLILRGAPALSAFRHGKLLEQLTQHVPAVTGLYAEFAHFADVTGALTADEEQVLARLLKYGPSVPVQEPSGRLFLVVPRFGTISPWSSKASDIARNCGLAKIDRLERGIAYYVQGELSESDAQQVAARLHDRMTQLVLDRLEGAAELFSHAQPRPLTAVDVLGGGRAALEKANVELGLALAEDEIDYLLKSFGELGRNPHDVELMMFAQANSEHCRHKIFNASWDIDGQAQDKSLFGMIKNTYEMNREGVLSAYKDNAAVIVGHVAGRFFPDPQTREYAASREPVQILMKVETHNHPTAIAPFPGASTGSGGEIRDEGATGRGAKPKAGLTGFTVSNLQIPGFEQPWEVPYGKPERIVTALDIMVEGPLGGAAFNNEFGRPALTGYFRTFEQKIATPHGEEVRGYHKPIMLAGGMGNIRDEHVQKGEISVGAKLIVLGGPAMLIGLGGGAASSMATGASSADLDFASVQRDNPEMERRCQEVIDRCWQLGERNPISFIHDVGAGGLSNALPELINDGGRGGRFELRAVPNDEPGMSPLEIWCNESQERYVLSVDAADFETFKAICERERCPFAVVGEAIEQRQLTVADSHFDNKPVDMPLEVLLGKAPRMHRAVTREAELGDDFDAAGLELQESVERVLRHPAVASKSFLITIGDRTITGLVARDQMVGPWQVPVADCAVTATSFDVYTGEAMAMGERTPLALLDAPASGRMAIGETVTNLAAARVGKLSDIKLSANWMAAAGHPGEDARLYDTVKAVGMELCPELGITIPVGKDSMSMKTRWQDNGEDKSVTSPVSLIVTGFAPVADVRQSLTPQLRLDKGETDLILIDLGRGKNRLGGSILAQVHGKLGRAVPDVDDAEDLKAFFAVIQGLNADGHILAYHDRSDGGLITSVLEMAFAGHCGVELNLDALADSREELAAVLFSEELGAVIQVREGATPEVLAQFSAAGLDDCVAVIGQPVNGYEINLNYNGETVYSAQRRILQRIWSETSYQIQRLRDNADCAEQEFDALLDEDNPGLSIKLSYDVNDDIAAPYIKKGVRPKVAILREQGVNGQVEMAAAFDRAGFAAIDVHMSDILAGRVDLDAFKGLVACGGFSYGDVLGAGEGWAKSILFNARARDGFQAFFARKDSFALGVCNGCQMMSNLHELIPGTEFWPHFVRNRSEQFEARVAMVQVQESSSIFLQGMAGSRLPIAIAHGEGHAEFESEEALLEADLSGCVSLRFVDNHGKVTEAYPANPNGSPRGITGLSSRDGRVTIMMPHPERVFRAVQNSWRPDDWQEDGGWLRMFRNARVWVD.

Residues 298-328 (TAIAPFPGASTGSGGEIRDEGATGRGAKPKA) form a disordered region. ATP contacts are provided by residues 305–316 (GASTGSGGEIRD), 384–386 (TGY), and A676. Mg(2+)-binding residues include D677, E716, N720, and D884. An ATP-binding site is contributed by S886. A Glutamine amidotransferase type-1 domain is found at 1045–1298 (VAILREQGVN…MFRNARVWVD (254 aa)). C1138 serves as the catalytic Nucleophile. Residues H1263 and E1265 contribute to the active site.

This sequence in the N-terminal section; belongs to the FGAMS family. Monomer.

The protein resides in the cytoplasm. It carries out the reaction N(2)-formyl-N(1)-(5-phospho-beta-D-ribosyl)glycinamide + L-glutamine + ATP + H2O = 2-formamido-N(1)-(5-O-phospho-beta-D-ribosyl)acetamidine + L-glutamate + ADP + phosphate + H(+). It participates in purine metabolism; IMP biosynthesis via de novo pathway; 5-amino-1-(5-phospho-D-ribosyl)imidazole from N(2)-formyl-N(1)-(5-phospho-D-ribosyl)glycinamide: step 1/2. Phosphoribosylformylglycinamidine synthase involved in the purines biosynthetic pathway. Catalyzes the ATP-dependent conversion of formylglycinamide ribonucleotide (FGAR) and glutamine to yield formylglycinamidine ribonucleotide (FGAM) and glutamate. The protein is Phosphoribosylformylglycinamidine synthase of Pseudomonas aeruginosa (strain ATCC 15692 / DSM 22644 / CIP 104116 / JCM 14847 / LMG 12228 / 1C / PRS 101 / PAO1).